The primary structure comprises 306 residues: Homoserine O-acetyltransferase (306 aa).

Cys142 (acyl-thioester intermediate) is an active-site residue. The substrate site is built by Lys163 and Ser192. His235 serves as the catalytic Proton acceptor. Residue Glu237 is part of the active site. Arg249 contributes to the substrate binding site.

This sequence belongs to the MetA family.

Its subcellular location is the cytoplasm. The enzyme catalyses L-homoserine + acetyl-CoA = O-acetyl-L-homoserine + CoA. The protein operates within amino-acid biosynthesis; L-methionine biosynthesis via de novo pathway; O-acetyl-L-homoserine from L-homoserine: step 1/1. In terms of biological role, transfers an acetyl group from acetyl-CoA to L-homoserine, forming acetyl-L-homoserine. This chain is Homoserine O-acetyltransferase, found in Clostridium botulinum (strain Alaska E43 / Type E3).